A 454-amino-acid chain; its full sequence is Peroxisome assembly protein 10 (454 aa).

At 1–23 (MATQPPPARPPPPLTSSPYPYAA) the chain is on the peroxisomal matrix side. The helical transmembrane segment at 24–53 (APDIIRAHQKDAYFQGVLANRLSDLHRRLR) threads the bilayer. A topological domain (cytoplasmic) is located at residue Gly54. A helical transmembrane segment spans residues 55–76 (ARSAHAWAAETRTFAAALYLCL). The Peroxisomal matrix portion of the chain corresponds to 77–132 (TTLLGNRTLGEEYCDLVQVEEAPSKLFASSSSKAADDHIYENGLGGGGDGGPLLPS). Residues 133–165 (LPRRAGYILTAIVLPHLASRALPSVRSAIRKRL) traverse the membrane as a helical segment. Over 166 to 201 (QSRLATLSRRRQQTGTKSGSGRGGRGGGGGITEYRV) the chain is Cytoplasmic. The disordered stretch occupies residues 171 to 194 (TLSRRRQQTGTKSGSGRGGRGGGG). A compositionally biased stretch (gly residues) spans 183-194 (SGSGRGGRGGGG). A helical transmembrane segment spans residues 202–229 (LRYLLTHLTPLTSGAHFRAATLAVFYFT). At 230–276 (GAYYELSKWVWGLRYVFTTRAGRVVDDDHNRHHHSPQHGGGNGGRAG) the chain is on the peroxisomal matrix side. Residues 277–296 (YEVLGVLLVVQMAVRAWLHV) form a helical membrane-spanning segment. The Cytoplasmic segment spans residues 297–454 (REQLSSGSVA…VQHILPLRAA (158 aa)). The disordered stretch occupies residues 302–329 (SGSVAGGGGEEEEDGEDGFRERTAFGPG). Zn(2+) contacts are provided by Cys402, Cys405, Cys417, His419, Cys422, Cys425, Cys436, and Cys439. An RING-type zinc finger spans residues 402–440 (CTLCLEELKDPAATQCGHVFCWACIGDWVREKPECPLCR).

The protein belongs to the pex2/pex10/pex12 family. As to quaternary structure, component of the PEX2-PEX10-PEX12 retrotranslocation channel, composed of PEX2, PEX10 and PEX12.

Its subcellular location is the peroxisome membrane. It catalyses the reaction S-ubiquitinyl-[E2 ubiquitin-conjugating enzyme]-L-cysteine + [acceptor protein]-L-lysine = [E2 ubiquitin-conjugating enzyme]-L-cysteine + N(6)-ubiquitinyl-[acceptor protein]-L-lysine.. It functions in the pathway protein modification; protein ubiquitination. Its activity is regulated as follows. The E3 ubiquitin-protein ligase activity is stimulated by PEX12. E3 ubiquitin-protein ligase component of a retrotranslocation channel required for peroxisome organization by mediating export of the PEX5 receptor from peroxisomes to the cytosol, thereby promoting PEX5 recycling. The retrotranslocation channel is composed of PEX2, PEX10 and PEX12; each subunit contributing transmembrane segments that coassemble into an open channel that specifically allows the passage of PEX5 through the peroxisomal membrane. PEX10 also regulates PEX5 recycling by acting as a E3 ubiquitin-protein ligase. When PEX5 recycling is compromised, PEX10 catalyzes polyubiquitination of PEX5 during its passage through the retrotranslocation channel, leading to its degradation. This Thermothelomyces thermophilus (strain ATCC 42464 / BCRC 31852 / DSM 1799) (Sporotrichum thermophile) protein is Peroxisome assembly protein 10.